The primary structure comprises 721 residues: Cytosolic carboxypeptidase 2 (721 aa).

The segment at 43–71 is disordered; the sequence is TASDMINSSSPSESSDSNLEEEQEESKPC. Over residues 50–59 the composition is skewed to low complexity; the sequence is SSSPSESSDS. Positions 334-605 constitute a Peptidase M14 domain; the sequence is YPYTYSKLQH…CFCDTLLDFC (272 aa). Residues His-400, Glu-403, and His-496 each coordinate Zn(2+). Catalysis depends on Glu-569, which acts as the Proton donor/acceptor. A disordered region spans residues 645–721; that stretch reads DIESSTSGSN…TQHGDTEDQS (77 aa). Positions 647–660 are enriched in low complexity; the sequence is ESSTSGSNSTESDG. Residues 672–688 are compositionally biased toward basic residues; it reads GKKKLLRSRKERNRLRQ. Polar residues predominate over residues 703–714; the sequence is YSCQTLNATTQH.

Belongs to the peptidase M14 family. Zn(2+) serves as cofactor.

It is found in the cytoplasm. Its subcellular location is the cytosol. The protein localises to the cytoskeleton. It localises to the microtubule organizing center. The protein resides in the centrosome. It is found in the centriole. Its subcellular location is the cilium basal body. It carries out the reaction (L-glutamyl)(n+1)-gamma-L-glutamyl-L-glutamyl-[protein] + H2O = (L-glutamyl)(n)-gamma-L-glutamyl-L-glutamyl-[protein] + L-glutamate. Metallocarboxypeptidase that mediates deglutamylation of target proteins. Catalyzes the deglutamylation of polyglutamate side chains generated by post-translational polyglutamylation in proteins such as tubulins. Also removes gene-encoded polyglutamates from the carboxy-terminus of target proteins such as MYLK. Does not show detyrosinase or deglycylase activities from the carboxy-terminus of tubulin. Its function is as follows. Metallocarboxypeptidase that mediates deglutamylation of tubulin and non-tubulin target proteins. Catalyzes the removal of polyglutamate side chains present on the gamma-carboxyl group of glutamate residues within the C-terminal tail of tubulin protein. Specifically cleaves tubulin long-side-chains, while it is not able to remove the branching point glutamate. Also catalyzes the removal of polyglutamate residues from the carboxy-terminus of non-tubulin proteins. This is Cytosolic carboxypeptidase 2 (zte25) from Danio rerio (Zebrafish).